The primary structure comprises 96 residues: Small ribosomal subunit protein bS6 (96 aa).

The protein belongs to the bacterial ribosomal protein bS6 family.

Binds together with bS18 to 16S ribosomal RNA. The protein is Small ribosomal subunit protein bS6 of Streptococcus pneumoniae serotype 2 (strain D39 / NCTC 7466).